We begin with the raw amino-acid sequence, 498 residues long: Protein MGF 505-5R (498 aa).

This sequence belongs to the asfivirus MGF 505 family.

Functionally, plays a role in virus cell tropism, and may be required for efficient virus replication in macrophages. The chain is Protein MGF 505-5R from Ornithodoros (relapsing fever ticks).